We begin with the raw amino-acid sequence, 333 residues long: Chemokine XC receptor 1 (333 aa).

Residues 1-31 (MESSGNPESTTFFYYDLQSQPCENQAWVFAT) lie on the Extracellular side of the membrane. A helical membrane pass occupies residues 32–59 (LATTVLYCLVFLLSLVGNSLVLWVLVKY). Residues 60 to 69 (ESLESLTNIF) lie on the Cytoplasmic side of the membrane. The chain crosses the membrane as a helical span at residues 70-89 (ILNLCLSDLVFACLLPVWIS). At 90–103 (PYHWGWVLGDFLCK) the chain is on the extracellular side. The cysteines at positions 102 and 175 are disulfide-linked. The helical transmembrane segment at 104–125 (LLNMIFSISLYSSIFFLTIMTI) threads the bilayer. Topologically, residues 126 to 142 (HRYLSVVSPLSTLRVPT) are cytoplasmic. A helical membrane pass occupies residues 143-167 (LRCRVLVTMAVWVASILSSILDTIF). Residues 168 to 190 (HKVLSSGCDYSELTWYLTSVYQH) are Extracellular-facing. The chain crosses the membrane as a helical span at residues 191–209 (NLFFLLSLGIILFCYVEIL). The Cytoplasmic segment spans residues 210 to 225 (RTLFRSRSKRRHRTVK). The chain crosses the membrane as a helical span at residues 226 to 250 (LIFAIVVAYFLSWGPYNFTLFLQTL). The Extracellular portion of the chain corresponds to 251 to 267 (FRTQIIRSCEAKQQLEY). The helical transmembrane segment at 268–291 (ALLICRNLAFSHCCFNPVLYVFVG) threads the bilayer. The Cytoplasmic segment spans residues 292 to 333 (VKFRTHLKHVLRQFWFCRLQAPSPASIPHSPGAFAYEGASFY).

The protein belongs to the G-protein coupled receptor 1 family.

Its subcellular location is the cell membrane. Functionally, receptor for chemokines SCYC1 and SCYC2. Subsequently transduces a signal by increasing the intracellular calcium ions level. Receptor for XCL1/Lymphotactin. The protein is Chemokine XC receptor 1 (XCR1) of Homo sapiens (Human).